We begin with the raw amino-acid sequence, 438 residues long: Probable glycine dehydrogenase (decarboxylating) subunit 1 (438 aa).

The protein belongs to the GcvP family. N-terminal subunit subfamily. As to quaternary structure, the glycine cleavage system is composed of four proteins: P, T, L and H. In this organism, the P 'protein' is a heterodimer of two subunits.

It carries out the reaction N(6)-[(R)-lipoyl]-L-lysyl-[glycine-cleavage complex H protein] + glycine + H(+) = N(6)-[(R)-S(8)-aminomethyldihydrolipoyl]-L-lysyl-[glycine-cleavage complex H protein] + CO2. Functionally, the glycine cleavage system catalyzes the degradation of glycine. The P protein binds the alpha-amino group of glycine through its pyridoxal phosphate cofactor; CO(2) is released and the remaining methylamine moiety is then transferred to the lipoamide cofactor of the H protein. In Syntrophomonas wolfei subsp. wolfei (strain DSM 2245B / Goettingen), this protein is Probable glycine dehydrogenase (decarboxylating) subunit 1.